A 416-amino-acid chain; its full sequence is Serine hydroxymethyltransferase (416 aa).

Residues leucine 121 and 125–127 (GHL) contribute to the (6S)-5,6,7,8-tetrahydrofolate site. Lysine 229 bears the N6-(pyridoxal phosphate)lysine mark. (6S)-5,6,7,8-tetrahydrofolate is bound by residues glutamate 245 and 354 to 356 (SPF).

This sequence belongs to the SHMT family. In terms of assembly, homodimer. Requires pyridoxal 5'-phosphate as cofactor.

The protein localises to the cytoplasm. It catalyses the reaction (6R)-5,10-methylene-5,6,7,8-tetrahydrofolate + glycine + H2O = (6S)-5,6,7,8-tetrahydrofolate + L-serine. Its pathway is one-carbon metabolism; tetrahydrofolate interconversion. It participates in amino-acid biosynthesis; glycine biosynthesis; glycine from L-serine: step 1/1. Catalyzes the reversible interconversion of serine and glycine with tetrahydrofolate (THF) serving as the one-carbon carrier. This reaction serves as the major source of one-carbon groups required for the biosynthesis of purines, thymidylate, methionine, and other important biomolecules. Also exhibits THF-independent aldolase activity toward beta-hydroxyamino acids, producing glycine and aldehydes, via a retro-aldol mechanism. The chain is Serine hydroxymethyltransferase from Aliivibrio salmonicida (strain LFI1238) (Vibrio salmonicida (strain LFI1238)).